Consider the following 919-residue polypeptide: Kinesin-like protein KIN-6 (919 aa).

The segment at 1–59 is disordered; sequence MVRLSTKPPNPKVEMNLKEPPITGAGAGAAASPPAPSTLRRNPPRSARPPPTPLPNSKP. A compositionally biased stretch (low complexity) spans 28–45; sequence GAAASPPAPSTLRRNPPR. Positions 46–56 are enriched in pro residues; it reads SARPPPTPLPN. A Kinesin motor domain is found at 72 to 415; sequence RLKVFLRIRP…LRQASPYMKI (344 aa). Residue 171-178 coordinates ATP; the sequence is GPTGSGKT. Disordered stretches follow at residues 591–615, 674–700, 711–730, 737–764, and 886–919; these read EEVS…TGTG, SESC…SFTD, SPQF…EEER, TTEG…EVNS, and KEEK…GRAQ. A compositionally biased stretch (basic and acidic residues) spans 597–612; sequence STGHGPERSSDYDDKT. Over residues 685–697 the composition is skewed to low complexity; the sequence is HSSSSLDHPSDQS. Over residues 755–764 the composition is skewed to polar residues; sequence TPSCSQEVNS. Residues 886–912 show a composition bias toward basic and acidic residues; it reads KEEKVKSSRDAMGRSDKLIRLLTDHPP.

The protein belongs to the TRAFAC class myosin-kinesin ATPase superfamily. Kinesin family. KIN-6 subfamily.

The polypeptide is Kinesin-like protein KIN-6 (Oryza sativa subsp. japonica (Rice)).